Reading from the N-terminus, the 505-residue chain is Deoxyguanosinetriphosphate triphosphohydrolase (505 aa).

An HD domain is found at 66–273 (RLTHSMEVQQ…MEAADDISYC (208 aa)).

Belongs to the dGTPase family. Type 1 subfamily. Homotetramer. It depends on Mg(2+) as a cofactor.

It catalyses the reaction dGTP + H2O = 2'-deoxyguanosine + triphosphate + H(+). In terms of biological role, dGTPase preferentially hydrolyzes dGTP over the other canonical NTPs. This is Deoxyguanosinetriphosphate triphosphohydrolase from Escherichia coli O157:H7.